We begin with the raw amino-acid sequence, 204 residues long: Imidazoleglycerol-phosphate dehydratase (204 aa).

This sequence belongs to the imidazoleglycerol-phosphate dehydratase family.

It is found in the cytoplasm. It carries out the reaction D-erythro-1-(imidazol-4-yl)glycerol 3-phosphate = 3-(imidazol-4-yl)-2-oxopropyl phosphate + H2O. It functions in the pathway amino-acid biosynthesis; L-histidine biosynthesis; L-histidine from 5-phospho-alpha-D-ribose 1-diphosphate: step 6/9. The polypeptide is Imidazoleglycerol-phosphate dehydratase (Rhodococcus opacus (strain B4)).